The primary structure comprises 325 residues: D-alanine--D-alanine ligase (325 aa).

The ATP-grasp domain maps to 121–316 (KYVFEGCGLP…FEELVVRILR (196 aa)). 147 to 202 (VAALGTPLSVKPAHEGSSIGIRKVNSAAELAEAYEAAARLDDLVLVEQWIEGPEFT) contributes to the ATP binding site. Mg(2+) is bound by residues Asp270, Glu283, and Asn285.

Belongs to the D-alanine--D-alanine ligase family. Requires Mg(2+) as cofactor. It depends on Mn(2+) as a cofactor.

The protein localises to the cytoplasm. It catalyses the reaction 2 D-alanine + ATP = D-alanyl-D-alanine + ADP + phosphate + H(+). The protein operates within cell wall biogenesis; peptidoglycan biosynthesis. Functionally, cell wall formation. This is D-alanine--D-alanine ligase from Marinobacter nauticus (strain ATCC 700491 / DSM 11845 / VT8) (Marinobacter aquaeolei).